We begin with the raw amino-acid sequence, 118 residues long: UPF0342 protein BT9727_0768 (118 aa).

It belongs to the UPF0342 family.

This Bacillus thuringiensis subsp. konkukian (strain 97-27) protein is UPF0342 protein BT9727_0768.